Consider the following 393-residue polypeptide: Phosphopentomutase (393 aa).

6 residues coordinate Mn(2+): Asp11, Asp282, His287, Asp323, His324, and His335.

Belongs to the phosphopentomutase family. The cofactor is Mn(2+).

The protein localises to the cytoplasm. It carries out the reaction 2-deoxy-alpha-D-ribose 1-phosphate = 2-deoxy-D-ribose 5-phosphate. The enzyme catalyses alpha-D-ribose 1-phosphate = D-ribose 5-phosphate. It functions in the pathway carbohydrate degradation; 2-deoxy-D-ribose 1-phosphate degradation; D-glyceraldehyde 3-phosphate and acetaldehyde from 2-deoxy-alpha-D-ribose 1-phosphate: step 1/2. In terms of biological role, isomerase that catalyzes the conversion of deoxy-ribose 1-phosphate (dRib-1-P) and ribose 1-phosphate (Rib-1-P) to deoxy-ribose 5-phosphate (dRib-5-P) and ribose 5-phosphate (Rib-5-P), respectively. The protein is Phosphopentomutase of Caldanaerobacter subterraneus subsp. tengcongensis (strain DSM 15242 / JCM 11007 / NBRC 100824 / MB4) (Thermoanaerobacter tengcongensis).